A 273-amino-acid chain; its full sequence is Thioredoxin-like 1-3, chloroplastic (273 aa).

Residues Met1–Ser44 constitute a chloroplast transit peptide. The region spanning Leu62–Arg202 is the Thioredoxin domain. Active-site nucleophile residues include Cys125 and Cys128. Cysteines 125 and 128 form a disulfide.

Belongs to the thioredoxin family.

The protein resides in the plastid. It localises to the chloroplast. In terms of biological role, probable thiol-disulfide oxidoreductase that may participate in various redox reactions. In Arabidopsis thaliana (Mouse-ear cress), this protein is Thioredoxin-like 1-3, chloroplastic.